The sequence spans 361 residues: MAPIKVGINGFGRIGRMVFQAICDQGLIGTEIDVVAVVDMSTNAEYFAYQMKHDTVHGRPKYTVEAVKSSPSVETADVLVVNGHRIKCVKAQRNPADLPWGKLGVDYVIESTGLFTDKLKAEGHIKGGAKKVVISAPASGGAKTIVMGVNQHEYSPASHHVVSNASCTTNCLAPIVHVLTKENFGIETGLMTTIHSYTATQKTVDGVSLKDWRGGRAAAVNIIPSTTGAAKAVGMVIPSTKGKLTGMSFRVPTPDVSVVDLTFRATRDTSIQEIDKAIKKAAQTYMKGILGFTDEELVSADFINDNRSSVYDSKATLQNNLPGEKRFFKVVSWYDNEWAYSHRVVDLVRYMAAKDAASSKM.

Residues 13–14 (RI), Asp-39, Gln-92, and Ser-135 each bind NAD(+). D-glyceraldehyde 3-phosphate-binding positions include 166 to 168 (SCT), Thr-198, 227 to 228 (TG), and Arg-250. Cys-167 acts as the Nucleophile in catalysis. Asn-336 lines the NAD(+) pocket. Residues 359-361 (SKM) carry the Microbody targeting signal motif.

The protein belongs to the glyceraldehyde-3-phosphate dehydrogenase family. As to quaternary structure, homotetramer.

The protein resides in the glycosome. The catalysed reaction is D-glyceraldehyde 3-phosphate + phosphate + NAD(+) = (2R)-3-phospho-glyceroyl phosphate + NADH + H(+). The protein operates within carbohydrate degradation; glycolysis; pyruvate from D-glyceraldehyde 3-phosphate: step 1/5. The protein is Glyceraldehyde-3-phosphate dehydrogenase, glycosomal (GAPG) of Leishmania mexicana.